The primary structure comprises 260 residues: Glutamate racemase (260 aa).

Substrate-binding positions include 7–8 (DS) and 39–40 (YG). Cys71 functions as the Proton donor/acceptor in the catalytic mechanism. Position 72-73 (72-73 (NT)) interacts with substrate. Catalysis depends on Cys182, which acts as the Proton donor/acceptor. 183 to 184 (TH) serves as a coordination point for substrate.

It belongs to the aspartate/glutamate racemases family.

It carries out the reaction L-glutamate = D-glutamate. It functions in the pathway cell wall biogenesis; peptidoglycan biosynthesis. Provides the (R)-glutamate required for cell wall biosynthesis. This is Glutamate racemase from Sulfurihydrogenibium sp. (strain YO3AOP1).